The following is a 350-amino-acid chain: Putative ankyrin repeat protein RBE_0589 (350 aa).

3 ANK repeats span residues 81–110 (DGFT…NPNI), 114–151 (DIVT…EPTD), and 153–182 (SGWT…NLDI).

The chain is Putative ankyrin repeat protein RBE_0589 from Rickettsia bellii (strain RML369-C).